A 447-amino-acid polypeptide reads, in one-letter code: Exodeoxyribonuclease 7 large subunit (447 aa).

This sequence belongs to the XseA family. As to quaternary structure, heterooligomer composed of large and small subunits.

It is found in the cytoplasm. The enzyme catalyses Exonucleolytic cleavage in either 5'- to 3'- or 3'- to 5'-direction to yield nucleoside 5'-phosphates.. Functionally, bidirectionally degrades single-stranded DNA into large acid-insoluble oligonucleotides, which are then degraded further into small acid-soluble oligonucleotides. The sequence is that of Exodeoxyribonuclease 7 large subunit from Streptococcus mutans serotype c (strain ATCC 700610 / UA159).